The primary structure comprises 366 residues: Beta sliding clamp (366 aa).

The protein belongs to the beta sliding clamp family. In terms of assembly, forms a ring-shaped head-to-tail homodimer around DNA which binds and tethers DNA polymerases and other proteins to the DNA. The DNA replisome complex has a single clamp-loading complex (3 tau and 1 each of delta, delta', psi and chi subunits) which binds 3 Pol III cores (1 core on the leading strand and 2 on the lagging strand) each with a beta sliding clamp dimer. Additional proteins in the replisome are other copies of gamma, psi and chi, Ssb, DNA helicase and RNA primase.

The protein resides in the cytoplasm. Functionally, confers DNA tethering and processivity to DNA polymerases and other proteins. Acts as a clamp, forming a ring around DNA (a reaction catalyzed by the clamp-loading complex) which diffuses in an ATP-independent manner freely and bidirectionally along dsDNA. Initially characterized for its ability to contact the catalytic subunit of DNA polymerase III (Pol III), a complex, multichain enzyme responsible for most of the replicative synthesis in bacteria; Pol III exhibits 3'-5' exonuclease proofreading activity. The beta chain is required for initiation of replication as well as for processivity of DNA replication. This chain is Beta sliding clamp (dnaN), found in Chlamydia pneumoniae (Chlamydophila pneumoniae).